A 330-amino-acid polypeptide reads, in one-letter code: Ketol-acid reductoisomerase (NADP(+)) (330 aa).

The KARI N-terminal Rossmann domain occupies 2–182 (ARLYYDTDAN…GGTRAGILET (181 aa)). Residues 25–28 (YGSQ), Ser-51, Ser-53, and 83–86 (DEVQ) each bind NADP(+). His-108 is a catalytic residue. Gly-134 contacts NADP(+). One can recognise a KARI C-terminal knotted domain in the interval 183-328 (TFREETETDL…RELRAMFSWL (146 aa)). 4 residues coordinate Mg(2+): Asp-191, Glu-195, Glu-227, and Glu-231. Ser-252 contributes to the substrate binding site.

It belongs to the ketol-acid reductoisomerase family. The cofactor is Mg(2+).

The catalysed reaction is (2R)-2,3-dihydroxy-3-methylbutanoate + NADP(+) = (2S)-2-acetolactate + NADPH + H(+). It catalyses the reaction (2R,3R)-2,3-dihydroxy-3-methylpentanoate + NADP(+) = (S)-2-ethyl-2-hydroxy-3-oxobutanoate + NADPH + H(+). It participates in amino-acid biosynthesis; L-isoleucine biosynthesis; L-isoleucine from 2-oxobutanoate: step 2/4. The protein operates within amino-acid biosynthesis; L-valine biosynthesis; L-valine from pyruvate: step 2/4. Its function is as follows. Involved in the biosynthesis of branched-chain amino acids (BCAA). Catalyzes an alkyl-migration followed by a ketol-acid reduction of (S)-2-acetolactate (S2AL) to yield (R)-2,3-dihydroxy-isovalerate. In the isomerase reaction, S2AL is rearranged via a Mg-dependent methyl migration to produce 3-hydroxy-3-methyl-2-ketobutyrate (HMKB). In the reductase reaction, this 2-ketoacid undergoes a metal-dependent reduction by NADPH to yield (R)-2,3-dihydroxy-isovalerate. In Synechococcus sp. (strain JA-2-3B'a(2-13)) (Cyanobacteria bacterium Yellowstone B-Prime), this protein is Ketol-acid reductoisomerase (NADP(+)).